The primary structure comprises 333 residues: Protein FLAP1 homolog A (333 aa).

Residues 26–46 (VVIIFVLAFTLVFTPTFEAEA) form a helical membrane-spanning segment. Residues 53-74 (IGGGSFRAPSAPSRSYSGPSGG) are disordered. The segment covering 58 to 70 (FRAPSAPSRSYSG) has biased composition (low complexity). Helical transmembrane passes span 92–112 (IIPF…LVMI) and 261–281 (GEYI…LPAV).

Belongs to the FLAP family.

Its subcellular location is the cellular thylakoid membrane. The protein localises to the cell inner membrane. Functionally, essential for photosynthetic growth under fluctuating light by modulating PxcA- and PxcL-dependent intracellular pH regulation via proton transport (e.g. transient pH reduction upon transition from dark to light followed by an increase in the light until light-to-dark shift). The sequence is that of Protein FLAP1 homolog A from Synechocystis sp. (strain ATCC 27184 / PCC 6803 / Kazusa).